The chain runs to 226 residues: Cytidylate kinase (226 aa).

Residue 10–18 (GFSSTGKST) coordinates ATP.

This sequence belongs to the cytidylate kinase family. Type 1 subfamily.

The protein localises to the cytoplasm. The enzyme catalyses CMP + ATP = CDP + ADP. The catalysed reaction is dCMP + ATP = dCDP + ADP. The sequence is that of Cytidylate kinase from Flavobacterium psychrophilum (strain ATCC 49511 / DSM 21280 / CIP 103535 / JIP02/86).